Here is a 327-residue protein sequence, read N- to C-terminus: DNA primase large subunit PriL (327 aa).

Residues C218, C290, C299, and C307 each contribute to the [4Fe-4S] cluster site.

Belongs to the eukaryotic-type primase large subunit family. Heterodimer of a small subunit (PriS) and a large subunit (PriL). [4Fe-4S] cluster is required as a cofactor.

Functionally, regulatory subunit of DNA primase, an RNA polymerase that catalyzes the synthesis of short RNA molecules used as primers for DNA polymerase during DNA replication. Stabilizes and modulates the activity of the small subunit, increasing the rate of DNA synthesis, and conferring RNA synthesis capability. The DNA polymerase activity may enable DNA primase to also catalyze primer extension after primer synthesis. May also play a role in DNA repair. The sequence is that of DNA primase large subunit PriL from Thermoplasma volcanium (strain ATCC 51530 / DSM 4299 / JCM 9571 / NBRC 15438 / GSS1).